We begin with the raw amino-acid sequence, 643 residues long: UPF0313 protein CLD_0573 (643 aa).

In terms of domain architecture, Radical SAM core spans 295-566; that stretch reads AIKEVKFSIT…RMQRALLQFS (272 aa). The [4Fe-4S] cluster site is built by C309, C313, and C316. A disordered region spans residues 598-643; the sequence is NKPYKKSHKKNNAKNNNNHYNKNNNKNKDISKKNKKNSLSKHKKRK. Positions 600 to 609 are enriched in basic residues; that stretch reads PYKKSHKKNN. Residues 610–621 show a composition bias toward low complexity; sequence AKNNNNHYNKNN. Basic residues predominate over residues 630–643; that stretch reads KNKKNSLSKHKKRK.

Belongs to the UPF0313 family. The cofactor is [4Fe-4S] cluster.

The protein is UPF0313 protein CLD_0573 of Clostridium botulinum (strain Okra / Type B1).